The following is an 86-amino-acid chain: Putative membrane protein insertion efficiency factor (86 aa).

It belongs to the UPF0161 family.

The protein localises to the cell inner membrane. In terms of biological role, could be involved in insertion of integral membrane proteins into the membrane. In Cellvibrio japonicus (strain Ueda107) (Pseudomonas fluorescens subsp. cellulosa), this protein is Putative membrane protein insertion efficiency factor.